Consider the following 294-residue polypeptide: Aquaporin NIP1-2 (294 aa).

M1 carries the N-acetylmethionine modification. A run of 2 helical transmembrane segments spans residues 54 to 74 (LMAE…AVAV) and 82 to 102 (VTLP…VYSL). An NPA 1 motif is present at residues 111–113 (NPA). Helical transmembrane passes span 133–153 (VISQ…LFGL), 177–197 (SFVI…GVAT), and 201–221 (AIGE…VIIA). Positions 230 to 232 (NPG) match the NPA 2 motif. A helical transmembrane segment spans residues 248–268 (WIYIVSPIVGAVSGAWVYNMV). The residue at position 283 (S283) is a Phosphoserine.

Belongs to the MIP/aquaporin (TC 1.A.8) family. NIP (TC 1.A.8.12) subfamily. In terms of tissue distribution, expressed in developing seeds.

The protein resides in the membrane. Water channel probably required to promote glycerol permeability and water transport across cell membranes. This is Aquaporin NIP1-2 (NIP1-2) from Arabidopsis thaliana (Mouse-ear cress).